Here is a 92-residue protein sequence, read N- to C-terminus: MGGGTSPEAQQDSVMRTDSSEMTDVESVITSFASSARAGRRNALPDIQSSLATSGSSDLPLKLEALAVKEDAKTKNEEKDQGQPKTPLNEGK.

The disordered stretch occupies residues 1-26 (MGGGTSPEAQQDSVMRTDSSEMTDVE). The segment covering 7-26 (PEAQQDSVMRTDSSEMTDVE) has biased composition (polar residues). Ser-56 is modified (phosphoserine). A compositionally biased stretch (basic and acidic residues) spans 70 to 82 (EDAKTKNEEKDQG). Residues 70–92 (EDAKTKNEEKDQGQPKTPLNEGK) form a disordered region.

It belongs to the PKI family.

Extremely potent competitive inhibitor of cAMP-dependent protein kinase activity, this protein interacts with the catalytic subunit of the enzyme after the cAMP-induced dissociation of its regulatory chains. This is cAMP-dependent protein kinase inhibitor beta (Pkib) from Mus musculus (Mouse).